The chain runs to 212 residues: uncharacterized protein (212 aa).

Positions 53, 74, and 97 each coordinate S-adenosyl-L-methionine.

Belongs to the methyltransferase superfamily. YrrT family.

In terms of biological role, could be a S-adenosyl-L-methionine-dependent methyltransferase. This is an uncharacterized protein from Bacillus mycoides (strain KBAB4) (Bacillus weihenstephanensis).